The primary structure comprises 116 residues: UPF0102 protein Neut_1662 (116 aa).

The protein belongs to the UPF0102 family.

The protein is UPF0102 protein Neut_1662 of Nitrosomonas eutropha (strain DSM 101675 / C91 / Nm57).